Reading from the N-terminus, the 248-residue chain is Triosephosphate isomerase (248 aa).

Substrate is bound by residues Asn11 and Lys13. The active-site Electrophile is His95. Glu165 (proton acceptor) is an active-site residue.

Belongs to the triosephosphate isomerase family. As to quaternary structure, homodimer.

The protein resides in the cytoplasm. The catalysed reaction is dihydroxyacetone phosphate = methylglyoxal + phosphate. The enzyme catalyses D-glyceraldehyde 3-phosphate = dihydroxyacetone phosphate. It participates in carbohydrate degradation; glycolysis; D-glyceraldehyde 3-phosphate from glycerone phosphate: step 1/1. The protein operates within carbohydrate biosynthesis; gluconeogenesis. Functionally, triosephosphate isomerase is an extremely efficient metabolic enzyme that catalyzes the interconversion between dihydroxyacetone phosphate (DHAP) and D-glyceraldehyde-3-phosphate (G3P) in glycolysis and gluconeogenesis. Its function is as follows. It is also responsible for the non-negligible production of methylglyoxal a reactive cytotoxic side-product that modifies and can alter proteins, DNA and lipids. This is Triosephosphate isomerase (TPI1) from Gallus gallus (Chicken).